The sequence spans 719 residues: Glycine--tRNA ligase beta subunit (719 aa).

The interval 65 to 84 is disordered; the sequence is PDREEEIKGPPAKAAFKDGK.

Belongs to the class-II aminoacyl-tRNA synthetase family. In terms of assembly, tetramer of two alpha and two beta subunits.

It is found in the cytoplasm. The catalysed reaction is tRNA(Gly) + glycine + ATP = glycyl-tRNA(Gly) + AMP + diphosphate. The chain is Glycine--tRNA ligase beta subunit from Trichodesmium erythraeum (strain IMS101).